We begin with the raw amino-acid sequence, 456 residues long: Phosphomethylpyrimidine synthase (456 aa).

Residues Asn-80, Met-109, Tyr-139, His-175, 195–197 (SRG), 236–239 (DSLR), and Glu-275 contribute to the substrate site. His-279 provides a ligand contact to Zn(2+). Tyr-302 provides a ligand contact to substrate. His-343 is a binding site for Zn(2+). Cys-423, Cys-426, and Cys-431 together coordinate [4Fe-4S] cluster.

The protein belongs to the ThiC family. [4Fe-4S] cluster is required as a cofactor.

The enzyme catalyses 5-amino-1-(5-phospho-beta-D-ribosyl)imidazole + S-adenosyl-L-methionine = 4-amino-2-methyl-5-(phosphooxymethyl)pyrimidine + CO + 5'-deoxyadenosine + formate + L-methionine + 3 H(+). Its pathway is cofactor biosynthesis; thiamine diphosphate biosynthesis. Its function is as follows. Catalyzes the synthesis of the hydroxymethylpyrimidine phosphate (HMP-P) moiety of thiamine from aminoimidazole ribotide (AIR) in a radical S-adenosyl-L-methionine (SAM)-dependent reaction. The chain is Phosphomethylpyrimidine synthase from Synechococcus sp. (strain ATCC 27144 / PCC 6301 / SAUG 1402/1) (Anacystis nidulans).